The sequence spans 514 residues: AAA-ATPase ASD, mitochondrial (514 aa).

A helical transmembrane segment spans residues valine 7–isoleucine 24. Position 250–257 (glycine 250–serine 257) interacts with ATP. 2 disordered regions span residues glycine 311 to glycine 342 and lysine 467 to aspartate 514. 2 stretches are compositionally biased toward basic and acidic residues: residues lysine 331–glycine 342 and lysine 467–lysine 502.

The protein belongs to the AAA ATPase family. BCS1 subfamily. Mg(2+) serves as cofactor. As to expression, expressed in seeds, specifically in the embryo.

Its subcellular location is the mitochondrion membrane. The enzyme catalyses ATP + H2O = ADP + phosphate + H(+). Functionally, required to regulate morphology and anatomy during seed maturation. The protein is AAA-ATPase ASD, mitochondrial (AATP1) of Arabidopsis thaliana (Mouse-ear cress).